Here is a 74-residue protein sequence, read N- to C-terminus: UPF0235 protein tsr1994 (74 aa).

The protein belongs to the UPF0235 family.

In Thermosynechococcus vestitus (strain NIES-2133 / IAM M-273 / BP-1), this protein is UPF0235 protein tsr1994.